Consider the following 1082-residue polypeptide: Protein argonaute 1A (1082 aa).

2 disordered regions span residues Met17–Asp148 and Gly187–Pro208. The span at Gly29–Thr38 shows a compositional bias: polar residues. The span at Gly72 to Pro100 shows a compositional bias: gly residues. Positions Pro420–Glu533 constitute a PAZ domain. The region spanning Leu709–Glu1030 is the Piwi domain. The segment at Ser1036–Val1065 is disordered.

It belongs to the argonaute family. Ago subfamily.

In terms of biological role, probably involved in the RNA silencing pathway. May bind to short RNAs such as microRNAs (miRNAs) or short interfering RNAs (siRNAs), and represses the translation of mRNAs which are complementary to them. This is Protein argonaute 1A (AGO1A) from Oryza sativa subsp. japonica (Rice).